The sequence spans 334 residues: Protein CUP-SHAPED COTYLEDON 3 (334 aa).

Residues 22 to 171 (LPPGFRFHPT…EWVICRVFNK (150 aa)) form the NAC domain. Residues 121-177 (VGMKKTLVFYKGRAPRGLKTKWVMHEYRLENDHSHRHTCKEEWVICRVFNKTGDRKN) mediate DNA binding.

As to expression, in a general manner, present at the boundaries between mersitems and araising primordia.

The protein localises to the nucleus. Its function is as follows. Transcription activator. Involved in molecular mechanisms regulating shoot apical meristem (SAM) formation during embryogenesis and organ separation. Required for axillary meristem initiation and separation of the meristem from the main stem. May act as an inhibitor of cell division. The sequence is that of Protein CUP-SHAPED COTYLEDON 3 (NAC031) from Arabidopsis thaliana (Mouse-ear cress).